Reading from the N-terminus, the 229-residue chain is Protein TraJ (229 aa).

The protein localises to the cytoplasm. Its function is as follows. This protein is essential for positively regulating the expression of transfer genes that are involved in the conjugal transfer of DNA between bacterial cells. The polypeptide is Protein TraJ (traJ) (Escherichia coli (strain K12)).